A 90-amino-acid chain; its full sequence is MAFFGKRKEKRKFTQQNPLFKRRKFCRFTAAGVEEIDYKDLDTLRDFVQENGKIIPARLTGTRAIYQRQLDTAIKRARFLALLPYTDNHK.

The protein belongs to the bacterial ribosomal protein bS18 family. In terms of assembly, part of the 30S ribosomal subunit. Forms a tight heterodimer with protein bS6.

Binds as a heterodimer with protein bS6 to the central domain of the 16S rRNA, where it helps stabilize the platform of the 30S subunit. In Bordetella bronchiseptica (strain ATCC BAA-588 / NCTC 13252 / RB50) (Alcaligenes bronchisepticus), this protein is Small ribosomal subunit protein bS18.